A 283-amino-acid chain; its full sequence is MAGTNKSYFHLHMISDSTGETLIMVARAVAAQYANVTPVEHVYPLVRSQKQLDRVLAEIEEAPGIVLFTLLEKDLVERVEATCKDMNIPSLSIIGPVMELFRAYLGRETSPRVGAQHTLNAEYFNRIDALNYTMMHDDGQHVEGLEEADVVLVGVSRTSKTPTSIYLANRGIRTANVPLVPGIPIPPQLETLKKPLVVSLHATPERLVQVRQNRLLGIGAGAPLPGRGEDSYIDSRSVAEEVAFARKLSAKYDWPLLDVTRRSIEETAAAVMKLYADRQRQHG.

154-161 (GVSRTSKT) is a binding site for ADP.

This sequence belongs to the pyruvate, phosphate/water dikinase regulatory protein family. PDRP subfamily.

It catalyses the reaction N(tele)-phospho-L-histidyl/L-threonyl-[pyruvate, phosphate dikinase] + ADP = N(tele)-phospho-L-histidyl/O-phospho-L-threonyl-[pyruvate, phosphate dikinase] + AMP + H(+). The enzyme catalyses N(tele)-phospho-L-histidyl/O-phospho-L-threonyl-[pyruvate, phosphate dikinase] + phosphate + H(+) = N(tele)-phospho-L-histidyl/L-threonyl-[pyruvate, phosphate dikinase] + diphosphate. Functionally, bifunctional serine/threonine kinase and phosphorylase involved in the regulation of the pyruvate, phosphate dikinase (PPDK) by catalyzing its phosphorylation/dephosphorylation. This is Putative pyruvate, phosphate dikinase regulatory protein from Afipia carboxidovorans (strain ATCC 49405 / DSM 1227 / KCTC 32145 / OM5) (Oligotropha carboxidovorans).